A 556-amino-acid polypeptide reads, in one-letter code: Urocanate hydratase (556 aa).

NAD(+)-binding positions include 52-53 (GG), glutamine 130, 176-178 (GMG), glutamate 196, arginine 201, 242-243 (NA), 263-267 (QTSAH), 273-274 (YL), and tyrosine 322. Cysteine 410 is a catalytic residue. An NAD(+)-binding site is contributed by glycine 492.

Belongs to the urocanase family. NAD(+) serves as cofactor.

It localises to the cytoplasm. The catalysed reaction is 4-imidazolone-5-propanoate = trans-urocanate + H2O. It participates in amino-acid degradation; L-histidine degradation into L-glutamate; N-formimidoyl-L-glutamate from L-histidine: step 2/3. Catalyzes the conversion of urocanate to 4-imidazolone-5-propionate. This Bradyrhizobium sp. (strain ORS 278) protein is Urocanate hydratase.